Here is a 370-residue protein sequence, read N- to C-terminus: 2-aminoethylphosphonate--pyruvate transaminase (370 aa).

At Lys-194 the chain carries N6-(pyridoxal phosphate)lysine.

Belongs to the class-V pyridoxal-phosphate-dependent aminotransferase family. PhnW subfamily. As to quaternary structure, homodimer. The cofactor is pyridoxal 5'-phosphate.

It carries out the reaction (2-aminoethyl)phosphonate + pyruvate = phosphonoacetaldehyde + L-alanine. Its function is as follows. Involved in phosphonate degradation. The protein is 2-aminoethylphosphonate--pyruvate transaminase of Paraburkholderia phymatum (strain DSM 17167 / CIP 108236 / LMG 21445 / STM815) (Burkholderia phymatum).